The sequence spans 243 residues: Small ribosomal subunit protein uS3 (243 aa).

Positions 39-107 constitute a KH type-2 domain; the sequence is IRAYLIKELK…ETHLNIVEVR (69 aa). Positions 214–243 are disordered; the sequence is ASERRGLEGDAQGPASRERGDRPDRRRENA. The segment covering 229-243 has biased composition (basic and acidic residues); that stretch reads SRERGDRPDRRRENA.

This sequence belongs to the universal ribosomal protein uS3 family. In terms of assembly, part of the 30S ribosomal subunit. Forms a tight complex with proteins S10 and S14.

Functionally, binds the lower part of the 30S subunit head. Binds mRNA in the 70S ribosome, positioning it for translation. The protein is Small ribosomal subunit protein uS3 of Agrobacterium fabrum (strain C58 / ATCC 33970) (Agrobacterium tumefaciens (strain C58)).